The chain runs to 463 residues: MKFSSIPIASTLLSLLVASSVTASPLRRRDDPLNGRQFGLLALHSGNEYVHLHGFYVGDSGSVYLDPADGTDDAATFTMSNGQLSVGNRYASVSANGEIVFKSDTNSTSSGFSVGEAISSGYSLKYNGTESAVACPSLVNNQVYQVFFGVGNGNPSCVGIAVLAVLPQPISSSSTYNSTTSSYHNSTSTPPPTITSTKASTVTSTEATTVTTTTAVTVTATETYTVTATNGGSTITSTGASTVTSTQPSTVTSTQRKNTATTTKTTTYVGPSPSASSVVAYTTKCIVVPVITTAASQSEAATPSPSAAVYPLFPHGIRLIDSTKPEANSGNVYSPVVFQKQNNHTNTIFTFDVPQVSGSCELNFHLDTSGFPITVEGVNGTGRFILFNLSSVANDSTVYSNRPNRIAEIGRFNCSSSGCDYATNVTCPDSYTAVSYEMMALTDDSYLSFFEEADPLEGLTLRV.

The signal sequence occupies residues Met-1 to Ala-23. 2 disordered regions span residues Ser-174–Ser-200 and Gly-239–Asn-258.

It belongs to the but2 family.

It is found in the cytoplasm. This is an uncharacterized protein from Schizosaccharomyces pombe (strain 972 / ATCC 24843) (Fission yeast).